The chain runs to 804 residues: Lon protease 2 (804 aa).

Residues Val19 to Leu216 enclose the Lon N-terminal domain. Residue Gly367–Thr374 coordinates ATP. The Lon proteolytic domain occupies Thr603 to Pro784. Active-site residues include Ser690 and Lys733. The tract at residues Leu782–Val804 is disordered.

It belongs to the peptidase S16 family. In terms of assembly, homohexamer. Organized in a ring with a central cavity.

The protein localises to the cytoplasm. The catalysed reaction is Hydrolysis of proteins in presence of ATP.. In terms of biological role, ATP-dependent serine protease that mediates the selective degradation of mutant and abnormal proteins as well as certain short-lived regulatory proteins. Required for cellular homeostasis and for survival from DNA damage and developmental changes induced by stress. Degrades polypeptides processively to yield small peptide fragments that are 5 to 10 amino acids long. Binds to DNA in a double-stranded, site-specific manner. This chain is Lon protease 2, found in Sorangium cellulosum (strain So ce56) (Polyangium cellulosum (strain So ce56)).